A 115-amino-acid polypeptide reads, in one-letter code: NADH-ubiquinone oxidoreductase chain 3 (115 aa).

The next 3 membrane-spanning stretches (helical) occupy residues 3–23 (LIMV…VAFW), 55–75 (FFLV…LLPI), and 84–104 (INTM…GLAY).

This sequence belongs to the complex I subunit 3 family. In terms of assembly, core subunit of respiratory chain NADH dehydrogenase (Complex I) which is composed of 45 different subunits. Interacts with TMEM186. Interacts with TMEM242.

The protein resides in the mitochondrion inner membrane. The enzyme catalyses a ubiquinone + NADH + 5 H(+)(in) = a ubiquinol + NAD(+) + 4 H(+)(out). Its function is as follows. Core subunit of the mitochondrial membrane respiratory chain NADH dehydrogenase (Complex I) which catalyzes electron transfer from NADH through the respiratory chain, using ubiquinone as an electron acceptor. Essential for the catalytic activity of complex I. This chain is NADH-ubiquinone oxidoreductase chain 3, found in Scotinomys teguina (Alston's brown mouse).